Reading from the N-terminus, the 461-residue chain is Siroheme synthase (461 aa).

Residues 1-204 are precorrin-2 dehydrogenase /sirohydrochlorin ferrochelatase; that stretch reads MRYLPLFVYL…GNFRKANRVI (204 aa). NAD(+) contacts are provided by residues 22-23 and 43-44; these read IV and KT. S128 is subject to Phosphoserine. Positions 218–461 are uroporphyrinogen-III C-methyltransferase; it reads GSVSLVGAGP…HNEISWFGNG (244 aa). P227 is an S-adenosyl-L-methionine binding site. D250 (proton acceptor) is an active-site residue. The active-site Proton donor is K272. S-adenosyl-L-methionine is bound by residues 303 to 305, I308, M386, and G415; that span reads GGD.

It in the N-terminal section; belongs to the precorrin-2 dehydrogenase / sirohydrochlorin ferrochelatase family. In the C-terminal section; belongs to the precorrin methyltransferase family.

The catalysed reaction is uroporphyrinogen III + 2 S-adenosyl-L-methionine = precorrin-2 + 2 S-adenosyl-L-homocysteine + H(+). The enzyme catalyses precorrin-2 + NAD(+) = sirohydrochlorin + NADH + 2 H(+). It catalyses the reaction siroheme + 2 H(+) = sirohydrochlorin + Fe(2+). It participates in cofactor biosynthesis; adenosylcobalamin biosynthesis; precorrin-2 from uroporphyrinogen III: step 1/1. The protein operates within cofactor biosynthesis; adenosylcobalamin biosynthesis; sirohydrochlorin from precorrin-2: step 1/1. It functions in the pathway porphyrin-containing compound metabolism; siroheme biosynthesis; precorrin-2 from uroporphyrinogen III: step 1/1. Its pathway is porphyrin-containing compound metabolism; siroheme biosynthesis; siroheme from sirohydrochlorin: step 1/1. It participates in porphyrin-containing compound metabolism; siroheme biosynthesis; sirohydrochlorin from precorrin-2: step 1/1. Functionally, multifunctional enzyme that catalyzes the SAM-dependent methylations of uroporphyrinogen III at position C-2 and C-7 to form precorrin-2 via precorrin-1. Then it catalyzes the NAD-dependent ring dehydrogenation of precorrin-2 to yield sirohydrochlorin. Finally, it catalyzes the ferrochelation of sirohydrochlorin to yield siroheme. The sequence is that of Siroheme synthase from Blochmanniella floridana.